A 162-amino-acid chain; its full sequence is UPF0114 protein Pput_0713 (162 aa).

4 helical membrane-spanning segments follow: residues 15–35 (LLAP…LKFF), 53–73 (LILV…LVMV), 109–126 (VAAS…RVFM), and 136–156 (LMWY…MGYL).

Belongs to the UPF0114 family.

The protein resides in the cell membrane. The chain is UPF0114 protein Pput_0713 from Pseudomonas putida (strain ATCC 700007 / DSM 6899 / JCM 31910 / BCRC 17059 / LMG 24140 / F1).